Reading from the N-terminus, the 388-residue chain is MKLSPLMALAGLASAQLALALPQATPSASATPSPTPGDGSFASTNGLQFVIDGETGYFAGSNSYWIGFLTNNADVDLVFTHMKEAGLRILRVWGFNDVNEKPADGTVWFQMHADGQSTINTGADGLQRLDYVVQSAEKHGIKLIVNFVNYWDDYGGMNAYVQAYGGSDNTDFYASKDMQAAYRAYIKAVVSRYLDSPAIFAWELANEPRCQGCAPSVLHDWIDSTSQYIKSLDSKHMTCIGDEGFGLDIGSDGSYPYGYSEGGNFTMSLALPTIDFGTFHLYPSSWGTNNDWGNGWVASHGAACKAAGKPCLFEEYGVTSDHCAVEKPWQMTALNTTGIAADLYWQYGDQLSSGQSPNDGNTIYYGTDEFTCLVTDHIASIGSRATRK.

The first 20 residues, 1 to 20, serve as a signal peptide directing secretion; that stretch reads MKLSPLMALAGLASAQLALA. The substrate site is built by Trp93 and Asn206. Catalysis depends on Glu207, which acts as the Proton donor. Asn264 carries an N-linked (GlcNAc...) asparagine glycan. Position 282 (Tyr282) interacts with substrate. The active-site Nucleophile is the Glu315. Asn335 carries an N-linked (GlcNAc...) asparagine glycan. Trp345 serves as a coordination point for substrate.

This sequence belongs to the glycosyl hydrolase 5 (cellulase A) family.

The protein localises to the secreted. It carries out the reaction Random hydrolysis of (1-&gt;4)-beta-D-mannosidic linkages in mannans, galactomannans and glucomannans.. Its function is as follows. Endo-1,4-mannanase, a crucial enzyme for depolymerization of seed galactomannans and wood galactoglucomannans. This is Probable mannan endo-1,4-beta-mannosidase A-1 (manA-1) from Aspergillus terreus (strain NIH 2624 / FGSC A1156).